A 314-amino-acid polypeptide reads, in one-letter code: Ribosomal protein L11 methyltransferase (314 aa).

Positions 161, 182, 204, and 248 each coordinate S-adenosyl-L-methionine.

It belongs to the methyltransferase superfamily. PrmA family.

It is found in the cytoplasm. It carries out the reaction L-lysyl-[protein] + 3 S-adenosyl-L-methionine = N(6),N(6),N(6)-trimethyl-L-lysyl-[protein] + 3 S-adenosyl-L-homocysteine + 3 H(+). Methylates ribosomal protein L11. The polypeptide is Ribosomal protein L11 methyltransferase (Listeria monocytogenes serotype 4a (strain HCC23)).